We begin with the raw amino-acid sequence, 375 residues long: Alcohol dehydrogenase 1A (375 aa).

Residue Ser-2 is modified to N-acetylserine. Residue Ser-23 is modified to Phosphoserine. A Zn(2+)-binding site is contributed by Cys-47. 48–52 (GTDDH) contributes to the NAD(+) binding site. His-68, Cys-98, Cys-101, Cys-104, Cys-112, and Cys-175 together coordinate Zn(2+). NAD(+) is bound by residues 200–205 (GLGGVG), Asp-224, Lys-229, Ile-270, 293–295 (VGV), 318–320 (AIL), and Arg-370.

It belongs to the zinc-containing alcohol dehydrogenase family. As to quaternary structure, dimer of identical or heterodimer of closely related subunits alpha, beta, or gamma that are encoded by genes ADH1A, ADH1B, and ADH1C, respectively. Zn(2+) serves as cofactor.

Its subcellular location is the cytoplasm. The catalysed reaction is a primary alcohol + NAD(+) = an aldehyde + NADH + H(+). It catalyses the reaction a secondary alcohol + NAD(+) = a ketone + NADH + H(+). The enzyme catalyses butan-1-ol + NAD(+) = butanal + NADH + H(+). It carries out the reaction 1-propanol + NAD(+) = propanal + NADH + H(+). Functionally, alcohol dehydrogenase. Oxidizes primary as well as secondary alcohols. Ethanol is a very poor substrate. This Homo sapiens (Human) protein is Alcohol dehydrogenase 1A (ADH1A).